The primary structure comprises 415 residues: Gamma-glutamyl phosphate reductase (415 aa).

This sequence belongs to the gamma-glutamyl phosphate reductase family.

Its subcellular location is the cytoplasm. The catalysed reaction is L-glutamate 5-semialdehyde + phosphate + NADP(+) = L-glutamyl 5-phosphate + NADPH + H(+). It functions in the pathway amino-acid biosynthesis; L-proline biosynthesis; L-glutamate 5-semialdehyde from L-glutamate: step 2/2. Catalyzes the NADPH-dependent reduction of L-glutamate 5-phosphate into L-glutamate 5-semialdehyde and phosphate. The product spontaneously undergoes cyclization to form 1-pyrroline-5-carboxylate. This Dictyoglomus thermophilum (strain ATCC 35947 / DSM 3960 / H-6-12) protein is Gamma-glutamyl phosphate reductase.